A 314-amino-acid chain; its full sequence is Thymidylate synthase (314 aa).

Residues arginine 32 and 176–177 (RR) contribute to the dUMP site. Cysteine 196 (nucleophile) is an active-site residue. Residues 216–219 (RSCD), asparagine 227, and 257–259 (HLY) contribute to the dUMP site. Aspartate 219 contacts (6R)-5,10-methylene-5,6,7,8-tetrahydrofolate. Position 313 (alanine 313) interacts with (6R)-5,10-methylene-5,6,7,8-tetrahydrofolate.

This sequence belongs to the thymidylate synthase family. Bacterial-type ThyA subfamily. In terms of assembly, homodimer.

It is found in the cytoplasm. The enzyme catalyses dUMP + (6R)-5,10-methylene-5,6,7,8-tetrahydrofolate = 7,8-dihydrofolate + dTMP. The protein operates within pyrimidine metabolism; dTTP biosynthesis. Catalyzes the reductive methylation of 2'-deoxyuridine-5'-monophosphate (dUMP) to 2'-deoxythymidine-5'-monophosphate (dTMP) while utilizing 5,10-methylenetetrahydrofolate (mTHF) as the methyl donor and reductant in the reaction, yielding dihydrofolate (DHF) as a by-product. This enzymatic reaction provides an intracellular de novo source of dTMP, an essential precursor for DNA biosynthesis. This chain is Thymidylate synthase, found in Novosphingobium aromaticivorans (strain ATCC 700278 / DSM 12444 / CCUG 56034 / CIP 105152 / NBRC 16084 / F199).